We begin with the raw amino-acid sequence, 129 residues long: Aspartate 1-decarboxylase (129 aa).

Ser25 acts as the Schiff-base intermediate with substrate; via pyruvic acid in catalysis. Ser25 bears the Pyruvic acid (Ser) mark. Thr57 contributes to the substrate binding site. Tyr58 serves as the catalytic Proton donor. Residue 73-75 coordinates substrate; that stretch reads GAA.

Belongs to the PanD family. Heterooctamer of four alpha and four beta subunits. The cofactor is pyruvate. Post-translationally, is synthesized initially as an inactive proenzyme, which is activated by self-cleavage at a specific serine bond to produce a beta-subunit with a hydroxyl group at its C-terminus and an alpha-subunit with a pyruvoyl group at its N-terminus.

It is found in the cytoplasm. It carries out the reaction L-aspartate + H(+) = beta-alanine + CO2. It functions in the pathway cofactor biosynthesis; (R)-pantothenate biosynthesis; beta-alanine from L-aspartate: step 1/1. Its function is as follows. Catalyzes the pyruvoyl-dependent decarboxylation of aspartate to produce beta-alanine. This chain is Aspartate 1-decarboxylase, found in Chlorobium chlorochromatii (strain CaD3).